A 69-amino-acid chain; its full sequence is Ubiquitin-ribosomal protein eL40 fusion protein (69 aa).

In terms of domain architecture, Ubiquitin-like spans 1–17 (NIQKESTLHLVLRLRGG). A Glycyl lysine isopeptide (Lys-Gly) (interchain with G-Cter in ubiquitin) cross-link involves residue Lys-4. Gly-17 is covalently cross-linked (Glycyl lysine isopeptide (Gly-Lys) (interchain with K-? in acceptor proteins)). Position 39 is an N6,N6,N6-trimethyllysine (Lys-39).

It in the N-terminal section; belongs to the ubiquitin family. This sequence in the C-terminal section; belongs to the eukaryotic ribosomal protein eL40 family. In terms of assembly, part of the 60S ribosomal subunit. Trimethylation of Lys-39 ('Lys-22' of the mature chain) by SMYD5 promotes translation elongation and protein synthesis.

Its subcellular location is the cytoplasm. It localises to the nucleus. Functionally, exists either covalently attached to another protein, or free (unanchored). When covalently bound, it is conjugated to target proteins via an isopeptide bond either as a monomer (monoubiquitin), a polymer linked via different Lys residues of the ubiquitin (polyubiquitin chains) or a linear polymer linked via the initiator Met of the ubiquitin (linear polyubiquitin chains). Polyubiquitin chains, when attached to a target protein, have different functions depending on the Lys residue of the ubiquitin that is linked: Lys-6-linked may be involved in DNA repair; Lys-11-linked is involved in ERAD (endoplasmic reticulum-associated degradation) and in cell-cycle regulation; Lys-29-linked is involved in proteotoxic stress response and cell cycle; Lys-33-linked is involved in kinase modification; Lys-48-linked is involved in protein degradation via the proteasome; Lys-63-linked is involved in endocytosis, DNA-damage responses as well as in signaling processes leading to activation of the transcription factor NF-kappa-B. Linear polymer chains formed via attachment by the initiator Met lead to cell signaling. Ubiquitin is usually conjugated to Lys residues of target proteins, however, in rare cases, conjugation to Cys or Ser residues has been observed. When polyubiquitin is free (unanchored-polyubiquitin), it also has distinct roles, such as in activation of protein kinases, and in signaling. In terms of biological role, component of the 60S subunit of the ribosome. The polypeptide is Ubiquitin-ribosomal protein eL40 fusion protein (UBA52) (Gallus gallus (Chicken)).